Reading from the N-terminus, the 38-residue chain is Large ribosomal subunit protein bL36 (38 aa).

The protein belongs to the bacterial ribosomal protein bL36 family.

This is Large ribosomal subunit protein bL36 from Prochlorococcus marinus (strain SARG / CCMP1375 / SS120).